Consider the following 630-residue polypeptide: A disintegrin and metalloproteinase with thrombospondin motifs 4 (630 aa).

A propeptide spanning residues R1–R5 is cleaved from the precursor. The Peptidase M12B domain maps to R11 to P221. 11 cysteine pairs are disulfide-bonded: C86/C138, C115/C120, C132/C216, C170/C200, C242/C265, C253/C275, C260/C294, C288/C299, C325/C362, C329/C367, and C340/C352. The N-linked (GlcNAc...) asparagine glycan is linked to N96. H154 is a Zn(2+) binding site. E155 is a catalytic residue. Zn(2+) is bound by residues H158 and H164. Residues G233–D303 form the Disintegrin domain. Residues A313–P368 form the TSP type-1 domain. An N-linked (GlcNAc...) asparagine glycan is attached at N474. The tract at residues S479–K630 is spacer.

Interacts with SRPX2. The cofactor is Zn(2+). Post-translationally, the precursor is cleaved by a furin endopeptidase. Glycosylated. Can be O-fucosylated by POFUT2 on a serine or a threonine residue found within the consensus sequence C1-X(2)-(S/T)-C2-G of the TSP type-1 repeat domains where C1 and C2 are the first and second cysteine residue of the repeat, respectively. Fucosylated repeats can then be further glycosylated by the addition of a beta-1,3-glucose residue by the glucosyltransferase, B3GALTL. Fucosylation mediates the efficient secretion of ADAMTS family members. Can also be C-glycosylated with one or two mannose molecules on tryptophan residues within the consensus sequence W-X-X-W of the TPRs, and N-glycosylated. These other glycosylations can also facilitate secretion. Brain specific.

The protein resides in the secreted. It is found in the extracellular space. It localises to the extracellular matrix. It carries out the reaction Glutamyl endopeptidase. Bonds cleaved include 370-Thr-Glu-Gly-Glu-|-Ala-Arg-Gly-Ser-377 in the interglobular domain of mammalian aggrecan.. Cleaves aggrecan, a cartilage proteoglycan, at the '392-Glu-|-Ala-393' site and may be involved in its turnover. Also cleaves COMP. May play an important role in the destruction of aggrecan in arthritic diseases. In Rattus norvegicus (Rat), this protein is A disintegrin and metalloproteinase with thrombospondin motifs 4 (Adamts4).